Here is a 367-residue protein sequence, read N- to C-terminus: Peptide chain release factor 2 (367 aa).

Gln-254 bears the N5-methylglutamine mark.

The protein belongs to the prokaryotic/mitochondrial release factor family. Methylated by PrmC. Methylation increases the termination efficiency of RF2.

It localises to the cytoplasm. Peptide chain release factor 2 directs the termination of translation in response to the peptide chain termination codons UGA and UAA. The sequence is that of Peptide chain release factor 2 from Burkholderia mallei (strain ATCC 23344).